Here is a 629-residue protein sequence, read N- to C-terminus: MFYQDNFDVIVIGGGHAGTEAALAAARTGQNTLLLTHNIDTLGQMSCNPAIGGIGKGHLVKEVDALGGLMAQAIDHSGIQFRTLNASKGPAVRATRAQADRALYKAYVRSVLENQPNLTLFQQAVDDLIIENDKVMGAVTQMGLKFRAKSVVLTAGTFLGGQIHIGMENFSGGRAGDPSSITLAQRLRERPFRIDRLKTGTPPRIDARSVDFSGLEAQPGDNPTPVFSFLGKREHHPQQVNCFITHTNEKTHDVIRNNLDRSPMYAGVIEGIGPRYCPSIEDKVMRFADKDSHQIFIEPEGLSTHELYPNGISTSLPFDVQLQIVRSMKGFENAHIVRPGYAIEYDFFDPRDLKSTYETKFIEGLFFAGQINGTTGYEEAAAQGLMAGLNASLFAQGKEGWSPRRDEAYMGVLIDDLSTLGTKEPYRMFTSRAEYRLLLREDNADLRLTEQGRTLGLVDDVRWARFNEKVENMEQERQRLKDIWINPKSEQVDQVNAILKTPIAREASGEDLLRRPEVNYQSLVSIDGFGPALEDSQASEQVEIQVKYAGYIQRQRDEIEKSLRHENTKLPFDLDYKEVKGLSNEVVAKLSDAKPETIGIASRISGITPAAISILLVHLKKHGLLKKGE.

Residues 13–18 (GGGHAG), Val125, and Ser180 contribute to the FAD site. Residue 273–287 (GPRYCPSIEDKVMRF) participates in NAD(+) binding. Gln370 provides a ligand contact to FAD.

The protein belongs to the MnmG family. In terms of assembly, homodimer. Heterotetramer of two MnmE and two MnmG subunits. The cofactor is FAD.

The protein localises to the cytoplasm. Its function is as follows. NAD-binding protein involved in the addition of a carboxymethylaminomethyl (cmnm) group at the wobble position (U34) of certain tRNAs, forming tRNA-cmnm(5)s(2)U34. The sequence is that of tRNA uridine 5-carboxymethylaminomethyl modification enzyme MnmG from Aliivibrio fischeri (strain ATCC 700601 / ES114) (Vibrio fischeri).